The chain runs to 202 residues: Phosphoenolpyruvate guanylyltransferase (202 aa).

3 residues coordinate phosphoenolpyruvate: Thr-140, Gly-156, and Ser-159.

Belongs to the CofC family.

It catalyses the reaction phosphoenolpyruvate + GTP + H(+) = enolpyruvoyl-2-diphospho-5'-guanosine + diphosphate. It participates in cofactor biosynthesis; coenzyme F420 biosynthesis. Its function is as follows. Guanylyltransferase that catalyzes the activation of phosphoenolpyruvate (PEP) as enolpyruvoyl-2-diphospho-5'-guanosine, via the condensation of PEP with GTP. It is involved in the biosynthesis of coenzyme F420, a hydride carrier cofactor. This chain is Phosphoenolpyruvate guanylyltransferase, found in Chloroflexus aggregans (strain MD-66 / DSM 9485).